A 208-amino-acid polypeptide reads, in one-letter code: Large ribosomal subunit protein bL25 (208 aa).

Belongs to the bacterial ribosomal protein bL25 family. CTC subfamily. In terms of assembly, part of the 50S ribosomal subunit; part of the 5S rRNA/L5/L18/L25 subcomplex. Contacts the 5S rRNA. Binds to the 5S rRNA independently of L5 and L18.

In terms of biological role, this is one of the proteins that binds to the 5S RNA in the ribosome where it forms part of the central protuberance. This chain is Large ribosomal subunit protein bL25, found in Acidovorax ebreus (strain TPSY) (Diaphorobacter sp. (strain TPSY)).